A 458-amino-acid chain; its full sequence is Ammonium transporter Rh type B (458 aa).

The Cytoplasmic segment spans residues 1–11; it reads MTDAATNMRLK. A helical transmembrane segment spans residues 12–32; the sequence is LPITCFILEIILIILFGTLVQ. At 33-58 the chain is on the extracellular side; sequence YDYETDAKEWHNTSHQDYENDFYFRY. Asparagine 44 is a glycosylation site (N-linked (GlcNAc...) asparagine). Residues 59–79 form a helical membrane-spanning segment; it reads PSFQDVHVMIFVGFGFLMTFL. The Cytoplasmic segment spans residues 80 to 83; sequence QRYG. Residues 84 to 104 traverse the membrane as a helical segment; it reads FGSVGFNFLIAAFSLQWATLM. Residues 105 to 121 are Extracellular-facing; it reads QGFFHGMHGGKIHIGVE. A helical transmembrane segment spans residues 122–142; sequence SMINADFCTGSVLISFGAVLG. Topologically, residues 143–151 are cytoplasmic; the sequence is KTSPIQLLT. Residues 152 to 172 traverse the membrane as a helical segment; sequence MAIFEVTLFAVNEFILLSLLG. The Extracellular segment spans residues 173 to 176; the sequence is TKDA. The chain crosses the membrane as a helical span at residues 177–197; that stretch reads GGSMTIHTFGAYFGLMVTRIL. Over 198 to 216 the chain is Cytoplasmic; it reads YRPNLDKSKHRNSSVYHSD. Residues 217–237 traverse the membrane as a helical segment; the sequence is LFAMIGTVYLWMFWPSFNSAI. The Extracellular portion of the chain corresponds to 238–247; the sequence is TAHGDDQHRT. Residues 248 to 270 traverse the membrane as a helical segment; sequence ALNTYYSLAACTLATYGMSAITS. Over 271-274 the chain is Cytoplasmic; that stretch reads HDGK. The helical transmembrane segment at 275 to 295 threads the bilayer; sequence LDMVHIQNAALAGGVAVGTAG. Residues 296–298 are Extracellular-facing; the sequence is EMM. A helical membrane pass occupies residues 299-319; it reads LTPFGSMIVGFMAGIISVLGF. The Cytoplasmic segment spans residues 320 to 340; it reads KFLSPILEDKLKIQDTCGIHN. The chain crosses the membrane as a helical span at residues 341–361; it reads LHGMPGVLGAIVGAVTAALAT. Over 362–391 the chain is Extracellular; that stretch reads TDVYGQGMADVFPAVADGSVNATKQGGIQA. A helical membrane pass occupies residues 392 to 412; sequence LSLAITLGIAVLGGLIVGFVL. Residues 413 to 458 lie on the Cytoplasmic side of the membrane; sequence KLPVFGTPPDTLCFEDSVYWEVPGSESPEEGELTSVKPEETEHLNS. Positions 436-458 are disordered; that stretch reads GSESPEEGELTSVKPEETEHLNS. Residues 449–458 are compositionally biased toward basic and acidic residues; it reads KPEETEHLNS.

This sequence belongs to the ammonium transporter (TC 2.A.49) family. Rh subfamily. In terms of tissue distribution, specifically expressed in the gill by pavement cells (at protein level).

The protein localises to the apicolateral cell membrane. Its subcellular location is the cytoplasmic vesicle membrane. Its function is as follows. Functions as an ammonia transporter. May play a role in the elimination of ammonia in the gill. This is Ammonium transporter Rh type B (rhbg) from Takifugu rubripes (Japanese pufferfish).